Reading from the N-terminus, the 161-residue chain is Transcriptional regulator MraZ (161 aa).

SpoVT-AbrB domains follow at residues 7–55 (RYTN…GPAF) and 84–127 (SAEL…EPGA).

The protein belongs to the MraZ family. In terms of assembly, forms oligomers.

The protein localises to the cytoplasm. It is found in the nucleoid. In Parvibaculum lavamentivorans (strain DS-1 / DSM 13023 / NCIMB 13966), this protein is Transcriptional regulator MraZ.